Here is a 45-residue protein sequence, read N- to C-terminus: Pseudo-hevein (45 aa).

The Chitin-binding type-1 domain maps to 1 to 43 (EQCGRQAGGKLCPNNLCCSQYGWCGSSDDYCSPSKNCQSNCKG). 4 disulfides stabilise this stretch: Cys3–Cys18, Cys12–Cys24, Cys17–Cys31, and Cys37–Cys41.

Functionally, N-acetyl-D-glucosamine / N-acetyl-D-neuraminic acid binding lectin. Can inhibit fungal growth. This Hevea brasiliensis (Para rubber tree) protein is Pseudo-hevein.